Reading from the N-terminus, the 248-residue chain is Tyrosine recombinase XerD-like (248 aa).

One can recognise a Core-binding (CB) domain in the interval 1–72 (MKSYIEPFIA…TANQFLYYLY (72 aa)). The Tyr recombinase domain maps to 85 to 248 (DTMKVMRTEK…PVTLEKYYKS (164 aa)). Catalysis depends on residues Lys-149 and Arg-213. Residue Tyr-245 is the O-(3'-phospho-DNA)-tyrosine intermediate of the active site.

The protein belongs to the 'phage' integrase family. XerD-like subfamily.

The protein resides in the cytoplasm. Functionally, putative tyrosine recombinase. Not involved in the cutting and rejoining of the recombining DNA molecules on dif(SL) site. This is Tyrosine recombinase XerD-like from Streptococcus pyogenes serotype M4 (strain MGAS10750).